Reading from the N-terminus, the 206-residue chain is Large ribosomal subunit protein uL4 (206 aa).

Belongs to the universal ribosomal protein uL4 family. As to quaternary structure, part of the 50S ribosomal subunit.

In terms of biological role, one of the primary rRNA binding proteins, this protein initially binds near the 5'-end of the 23S rRNA. It is important during the early stages of 50S assembly. It makes multiple contacts with different domains of the 23S rRNA in the assembled 50S subunit and ribosome. Functionally, forms part of the polypeptide exit tunnel. In Rhodopseudomonas palustris (strain BisA53), this protein is Large ribosomal subunit protein uL4.